The sequence spans 309 residues: Isoflavone reductase homolog IRL (309 aa).

Residues 12–18 (GGTGYLG), R37, and K46 each bind NADP(+). Residue K134 is the Proton acceptor of the active site. NADP(+) is bound at residue R138.

The protein belongs to the NmrA-type oxidoreductase family. Isoflavone reductase subfamily. In terms of assembly, monomer.

The protein resides in the cytoplasm. The protein operates within alkaloid biosynthesis. Its function is as follows. Reductase that may be involved in a late step of alkaloid biosynthesis. The protein is Isoflavone reductase homolog IRL of Zea mays (Maize).